A 128-amino-acid chain; its full sequence is MRFALMVTGPAYGTQQASSALQFAQAVLAEGHELSSVFFYREGVYNANQFTSPASDEYDLVRGWQALNETQGVELHICVAAALRRGVADETEAKRLGLSGANLQHGFTLSGLGALAQAALTCDRMVQF.

Cys78 serves as the catalytic Cysteine persulfide intermediate.

It belongs to the DsrE/TusD family. As to quaternary structure, heterohexamer, formed by a dimer of trimers. The hexameric TusBCD complex contains 2 copies each of TusB, TusC and TusD. The TusBCD complex interacts with TusE.

It is found in the cytoplasm. Part of a sulfur-relay system required for 2-thiolation of 5-methylaminomethyl-2-thiouridine (mnm(5)s(2)U) at tRNA wobble positions. Accepts sulfur from TusA and transfers it in turn to TusE. The protein is Sulfurtransferase TusD of Enterobacter sp. (strain 638).